Here is an 89-residue protein sequence, read N- to C-terminus: Putative regulatory protein Nther_1328 (89 aa).

Belongs to the RemA family.

In Natranaerobius thermophilus (strain ATCC BAA-1301 / DSM 18059 / JW/NM-WN-LF), this protein is Putative regulatory protein Nther_1328.